The sequence spans 271 residues: 4-diphosphocytidyl-2-C-methyl-D-erythritol kinase (271 aa).

Residue lysine 17 is part of the active site. 97-107 (PVGSGLGGGSS) lines the ATP pocket. Aspartate 137 is a catalytic residue.

It belongs to the GHMP kinase family. IspE subfamily.

The catalysed reaction is 4-CDP-2-C-methyl-D-erythritol + ATP = 4-CDP-2-C-methyl-D-erythritol 2-phosphate + ADP + H(+). The protein operates within isoprenoid biosynthesis; isopentenyl diphosphate biosynthesis via DXP pathway; isopentenyl diphosphate from 1-deoxy-D-xylulose 5-phosphate: step 3/6. Functionally, catalyzes the phosphorylation of the position 2 hydroxy group of 4-diphosphocytidyl-2C-methyl-D-erythritol. The sequence is that of 4-diphosphocytidyl-2-C-methyl-D-erythritol kinase from Thermotoga petrophila (strain ATCC BAA-488 / DSM 13995 / JCM 10881 / RKU-1).